The primary structure comprises 306 residues: Follistatin-related protein 1 (306 aa).

Residues 1 to 18 (MWKRWLALSLVTIALVHG) form the signal peptide. One can recognise a Follistatin-like domain in the interval 28 to 51 (ICANVFCGAGRECAVTEKGEPTCL). 5 disulfide bridges follow: C29–C40, C34–C50, C52–C82, C56–C75, and C64–C96. The 53-residue stretch at 46–98 (GEPTCLCIEQCKPHKRPVCGSNGKTYLNHCELHRDACLTGSKIQVDYDGHCKE) folds into the Kazal-like domain. N-linked (GlcNAc...) asparagine glycosylation is present at N142. Residues 142 to 176 (NYSEILDKYFKSFDNGDSHLDSSEFLKFVEQNETA) form the EF-hand 1 domain. The residue at position 163 (S163) is a Phosphoserine. N-linked (GlcNAc...) asparagine glycosylation is found at N173 and N178. Positions 191 to 226 (LRSLCVDALIELSDENADWKLSFQEFLKCLNPSFNP) constitute an EF-hand 2 domain. The VWFC domain occupies 231–285 (CALEDETYADGAETEVDCNRCVCSCGHWVCTAMTCDGKNQKGVQTHTEEEKTGYV).

Homodimer. Interacts with SCN10A. Interacts with DIP2A; DIP2A may act as a cell surface receptor for FSTL1. Interacts with BMP4. Interacts with CD14; this interaction promotes TL4-mediated signaling cascade. In terms of tissue distribution, during central nervous system development, strongly expressed in the telencephalon, diencephalon, brainstem, limbic system and spinal cord. Widely expressed in all organs.

It is found in the secreted. Functionally, secreted glycoprotein that is involved in various physiological processes, such as angiogenesis, regulation of the immune response, cell proliferation and differentiation. Plays a role in the development of the central nervous system, skeletal system, lungs, and ureter. Promotes endothelial cell survival, migration and differentiation into network structures in an AKT-dependent manner. Also promotes survival of cardiac myocytes. Initiates various signaling cascades by activating different receptors on the cell surface such as DIP2A, TLR4 or BMP receptors. The polypeptide is Follistatin-related protein 1 (Fstl1) (Mus musculus (Mouse)).